Reading from the N-terminus, the 396-residue chain is Elongation factor Tu (396 aa).

In terms of domain architecture, tr-type G spans 10-206 (KPHVNIGTIG…AVDESVPDPI (197 aa)). Residues 19 to 26 (GHVDHGKT) are G1. Residue 19–26 (GHVDHGKT) participates in GTP binding. Thr26 is a Mg(2+) binding site. The tract at residues 62–66 (GITIN) is G2. Positions 83–86 (DAPG) are G3. Residues 83–87 (DAPGH) and 138–141 (NKSD) each bind GTP. The interval 138–141 (NKSD) is G4. The segment at 176-178 (SGL) is G5.

Belongs to the TRAFAC class translation factor GTPase superfamily. Classic translation factor GTPase family. EF-Tu/EF-1A subfamily. Monomer.

It is found in the cytoplasm. It carries out the reaction GTP + H2O = GDP + phosphate + H(+). Its function is as follows. GTP hydrolase that promotes the GTP-dependent binding of aminoacyl-tRNA to the A-site of ribosomes during protein biosynthesis. The sequence is that of Elongation factor Tu from Renibacterium salmoninarum (strain ATCC 33209 / DSM 20767 / JCM 11484 / NBRC 15589 / NCIMB 2235).